A 254-amino-acid polypeptide reads, in one-letter code: Major prion protein (254 aa).

Positions 1-22 (MANLSYWLLALFVATWTDVGLC) are cleaved as a signal peptide. Residues 23–231 (KKRPKPGGWN…SQAYYDGRRS (209 aa)) form an interaction with GRB2, ERI3 and SYN1 region. A disordered region spans residues 25 to 104 (RPKPGGWNTG…THNQWNKPSK (80 aa)). 5 tandem repeats follow at residues 51-59 (PQGGGTWGQ), 60-67 (PHGGGWGQ), 68-75 (PHGGGWGQ), 76-83 (PHGGGWGQ), and 84-91 (PHGGGWGQ). Positions 51 to 91 (PQGGGTWGQPHGGGWGQPHGGGWGQPHGGGWGQPHGGGWGQ) are 5 X 8 AA tandem repeats of P-H-G-G-G-W-G-Q. Positions 52-95 (QGGGTWGQPHGGGWGQPHGGGWGQPHGGGWGQPHGGGWGQGGGT) are enriched in gly residues. Cu(2+) contacts are provided by His61, Gly62, Gly63, His69, Gly70, Gly71, His77, Gly78, Gly79, His85, Gly86, and Gly87. Positions 90-231 (GQGGGTHNQW…SQAYYDGRRS (142 aa)) are prP27-30 (protease resistant core). Residues Cys179 and Cys214 are joined by a disulfide bond. N-linked (GlcNAc...) asparagine glycosylation is found at Asn181 and Asn197. Residue Ser231 is the site of GPI-anchor amidated serine attachment. Positions 232 to 254 (SAVLFSSPPVILLISFLIFLIVG) are cleaved as a propeptide — removed in mature form.

This sequence belongs to the prion family. As to quaternary structure, monomer and homodimer. Has a tendency to aggregate into amyloid fibrils containing a cross-beta spine, formed by a steric zipper of superposed beta-strands. Soluble oligomers may represent an intermediate stage on the path to fibril formation. Copper binding may promote oligomerization. Interacts with GRB2, APP, ERI3/PRNPIP and SYN1. Mislocalized cytosolically exposed PrP interacts with MGRN1; this interaction alters MGRN1 subcellular location and causes lysosomal enlargement. Interacts with KIAA1191.

The protein resides in the cell membrane. It localises to the golgi apparatus. Its function is as follows. Its primary physiological function is unclear. Has cytoprotective activity against internal or environmental stresses. May play a role in neuronal development and synaptic plasticity. May be required for neuronal myelin sheath maintenance. May play a role in iron uptake and iron homeostasis. Soluble oligomers are toxic to cultured neuroblastoma cells and induce apoptosis (in vitro). Association with GPC1 (via its heparan sulfate chains) targets PRNP to lipid rafts. Also provides Cu(2+) or Zn(2+) for the ascorbate-mediated GPC1 deaminase degradation of its heparan sulfate side chains. This chain is Major prion protein (PRNP), found in Cricetulus griseus (Chinese hamster).